Consider the following 397-residue polypeptide: CCA-adding enzyme (397 aa).

Residues Gly-27 and Arg-30 each coordinate ATP. 2 residues coordinate CTP: Gly-27 and Arg-30. Mg(2+)-binding residues include Asp-40 and Asp-42. Residues Arg-111, Asp-154, Arg-157, Arg-160, and Arg-163 each coordinate ATP. Positions 111, 154, 157, 160, and 163 each coordinate CTP.

This sequence belongs to the tRNA nucleotidyltransferase/poly(A) polymerase family. Bacterial CCA-adding enzyme type 3 subfamily. As to quaternary structure, homodimer. The cofactor is Mg(2+).

The enzyme catalyses a tRNA precursor + 2 CTP + ATP = a tRNA with a 3' CCA end + 3 diphosphate. It carries out the reaction a tRNA with a 3' CCA end + 2 CTP + ATP = a tRNA with a 3' CCACCA end + 3 diphosphate. Functionally, catalyzes the addition and repair of the essential 3'-terminal CCA sequence in tRNAs without using a nucleic acid template. Adds these three nucleotides in the order of C, C, and A to the tRNA nucleotide-73, using CTP and ATP as substrates and producing inorganic pyrophosphate. Has no poly(A) polymerase activity. The protein is CCA-adding enzyme of Bacillus subtilis (strain 168).